Here is a 123-residue protein sequence, read N- to C-terminus: UPF0738 protein BcerKBAB4_1107 (123 aa).

The protein belongs to the UPF0738 family.

This Bacillus mycoides (strain KBAB4) (Bacillus weihenstephanensis) protein is UPF0738 protein BcerKBAB4_1107.